Reading from the N-terminus, the 117-residue chain is UPF0102 protein Ssed_4252 (117 aa).

Belongs to the UPF0102 family.

The protein is UPF0102 protein Ssed_4252 of Shewanella sediminis (strain HAW-EB3).